An 872-amino-acid polypeptide reads, in one-letter code: MREPNLYVILSHALIGCGFFFLYVQHVRVIFETRTNIQQLNQLEREALLRREDALYYAFYKQLAEGPDFWHGYEQLKNVTDIEYPHSVNVLQRFYVLPELVTAYFFHVVRSGFNPMVQPMQFYLEFVWLMGGVTLLVLYLYGTLLSENIFGGIYGVISYLMFHSFVAKIYERPLARENFAFPFIFLQMFYLCICIGRIIHRQRHTSRMFMIFAMSLFTACALLSWQFSTFIFTTQILIMMTSWNASALPTALVNAFVLDYSLSHLLGHALAFVMSHGNSQLLLTWQLSISLFLFLITMVRQLRHVRSRRLGHAQDLLNGDLFSLKFLMLTLLLASSVQTTLIELFNRAGVVSVTEGDQQHFFDICAHWALQVNVGFVAHLSACNPQYARVAWSELWQLVKTMIVKPYCMYGVVMLAMFFRRWRKSGAPVSALTEEQRERARKYVLEDFIEEHFVSMSDMSSKETEKQLYKCFRLLKSCDYDYERYKRAQASLRKEQPPARDDFMQDIKRLRAQINRNSVKQRKERAQETKEAATDGASTPTEEEDKDPEAESESKKKNQEPGSGETETESAADPTETPPSRSADNEEEEEEHSATAAGCGSNSSGHRQRKRSSSRRSSVVPTANAQILNMHYVYSFLQMLVFTLIGLAVRKLFFLSFTQGCVIAPTVCSKLWYHRQRNIFWSVSLAVFLLSMFDPGMVNIREEYFPTRYSKSGDDLDSMLEWIKLNTERDAVFAGPVDIIGTVHLTTKRPIVNHAHLEMRQIAERTEHVYSVYSRQQSSDIYNQCAQLKIQYLIISLDECTNEVRDDCDLLAIWDDKQPAYQKYPQFCHELLHKNVPSFLKVFANDHYGIIKMFSQSVQINLKHNKMPEMSI.

9 helical membrane passes run 4-24 (PNLY…FLYV), 126-146 (FVWL…TLLS), 149-169 (IFGG…VAKI), 179-199 (FAFP…GRII), 211-231 (IFAM…STFI), 257-277 (VLDY…MSHG), 279-299 (SQLL…ITMV), 326-346 (FLML…ELFN), and 399-419 (VKTM…AMFF). A coiled-coil region spans residues 508–535 (KRLRAQINRNSVKQRKERAQETKEAATD). The segment at 514–620 (INRNSVKQRK…RSSSRRSSVV (107 aa)) is disordered. Residues 524–533 (ERAQETKEAA) show a composition bias toward basic and acidic residues. Residues 541–551 (TEEEDKDPEAE) show a composition bias toward acidic residues. A run of 2 helical transmembrane segments spans residues 627-647 (ILNM…LIGL) and 678-698 (NIFW…PGMV).

This sequence belongs to the dpy-19 family.

Its subcellular location is the membrane. Probable C-mannosyltransferase that mediates C-mannosylation of tryptophan residues on target proteins. The chain is C-mannosyltransferase dpy-19 homolog from Drosophila melanogaster (Fruit fly).